The following is a 601-amino-acid chain: MTHTESTFSFLGLNPFIIKSLSKMGYVKPSPIQAACIPLLLEGRDVLGMAQTGSGKTAAFSLPLLHNLNINLKAPQILVLAPTRELAVQVAEAFSDFSKYIMGIHVLPLYGGQRYEVQLRALRQGPQIVVGTPGRLLDHLKRGTLNLSNLYALVLDEADEMLRMGFIEDVETIMSQIPKEHQTALFSATMPEAIRRISKRFMKNPQEIKIQSNITTRPDIKQSYWMVYGRKTDALIRFLEVEDFSATIIFVKTKNATLEVSEALERNGYNSAALNGDMNQALREQTLERLKSGRLDILIATDVAARGLDVDRISFVINYDIPMDSESYVHRIGRTGRAGRAGRALLFVENRERRLLRNIERTINQTIPEVQLPKIEVLCKRRLERFAKKVQEQLESRDLDEYSALLDKLYSPDDLDIKTLASALLKMAQGGRPLIIKKDLLQRPSREFSFKDDRRREDNHRNNNRNRRERRELKDIDLYRIEAGRNDGVEVRHIVGAIANEGNINSRNIGNIKLFSSYAIVELPKGLSKDLLQRLIKTKILNKKINIKLLRDIKNYETRTHNRSIFNKDKNNKRRFSDNRLNKSSSIKNETKSSFFRRKSV.

Residues 6–34 (STFSFLGLNPFIIKSLSKMGYVKPSPIQA) carry the Q motif motif. A Helicase ATP-binding domain is found at 37 to 208 (IPLLLEGRDV…KRFMKNPQEI (172 aa)). 50-57 (AQTGSGKT) serves as a coordination point for ATP. A DEAD box motif is present at residues 156 to 159 (DEAD). The Helicase C-terminal domain occupies 231-378 (KTDALIRFLE…EVQLPKIEVL (148 aa)). Positions 564-581 (SIFNKDKNNKRRFSDNRL) are enriched in basic and acidic residues. Positions 564 to 601 (SIFNKDKNNKRRFSDNRLNKSSSIKNETKSSFFRRKSV) are disordered. Positions 582 to 594 (NKSSSIKNETKSS) are enriched in polar residues.

Belongs to the DEAD box helicase family. DeaD/CsdA subfamily.

The protein localises to the cytoplasm. The catalysed reaction is ATP + H2O = ADP + phosphate + H(+). Functionally, DEAD-box RNA helicase involved in various cellular processes at low temperature, including ribosome biogenesis, mRNA degradation and translation initiation. In Buchnera aphidicola subsp. Schizaphis graminum (strain Sg), this protein is ATP-dependent RNA helicase DeaD.